The sequence spans 352 residues: Probable protein phosphatase 2C 42 (352 aa).

The 296-residue stretch at 26–321 (AYASSAMQGY…DNMSVILVRF (296 aa)) folds into the PPM-type phosphatase domain. Mn(2+) contacts are provided by aspartate 62, glycine 63, aspartate 267, and aspartate 312. Residues 328–352 (RGARAATSSTSTGTVPSRHSKSISL) are disordered. The span at 329–341 (GARAATSSTSTGT) shows a compositional bias: low complexity.

It belongs to the PP2C family. The cofactor is Mg(2+). Mn(2+) serves as cofactor.

The catalysed reaction is O-phospho-L-seryl-[protein] + H2O = L-seryl-[protein] + phosphate. It catalyses the reaction O-phospho-L-threonyl-[protein] + H2O = L-threonyl-[protein] + phosphate. In Oryza sativa subsp. japonica (Rice), this protein is Probable protein phosphatase 2C 42.